The chain runs to 279 residues: Pantothenate synthetase (279 aa).

26 to 33 (MGNLHEGH) lines the ATP pocket. His-33 serves as the catalytic Proton donor. Gln-57 lines the (R)-pantoate pocket. Gln-57 provides a ligand contact to beta-alanine. 144-147 (GKKD) is an ATP binding site. Gln-150 contributes to the (R)-pantoate binding site. ATP contacts are provided by residues Val-173 and 181–184 (LSSR).

It belongs to the pantothenate synthetase family. As to quaternary structure, homodimer.

The protein localises to the cytoplasm. The catalysed reaction is (R)-pantoate + beta-alanine + ATP = (R)-pantothenate + AMP + diphosphate + H(+). Its pathway is cofactor biosynthesis; (R)-pantothenate biosynthesis; (R)-pantothenate from (R)-pantoate and beta-alanine: step 1/1. In terms of biological role, catalyzes the condensation of pantoate with beta-alanine in an ATP-dependent reaction via a pantoyl-adenylate intermediate. In Burkholderia ambifaria (strain ATCC BAA-244 / DSM 16087 / CCUG 44356 / LMG 19182 / AMMD) (Burkholderia cepacia (strain AMMD)), this protein is Pantothenate synthetase.